The primary structure comprises 272 residues: ATP synthase subunit a (272 aa).

5 helical membrane passes run 41–61, 101–121, 147–167, 221–241, and 243–263; these read VLNI…LVLF, VIAP…FMDL, DVNI…FYSI, LIFI…LSVP, and AIFH…LTIV.

The protein belongs to the ATPase A chain family. F-type ATPases have 2 components, CF(1) - the catalytic core - and CF(0) - the membrane proton channel. CF(1) has five subunits: alpha(3), beta(3), gamma(1), delta(1), epsilon(1). CF(0) has three main subunits: a(1), b(2) and c(9-12). The alpha and beta chains form an alternating ring which encloses part of the gamma chain. CF(1) is attached to CF(0) by a central stalk formed by the gamma and epsilon chains, while a peripheral stalk is formed by the delta and b chains.

The protein localises to the cell inner membrane. Functionally, key component of the proton channel; it plays a direct role in the translocation of protons across the membrane. The polypeptide is ATP synthase subunit a (Erwinia tasmaniensis (strain DSM 17950 / CFBP 7177 / CIP 109463 / NCPPB 4357 / Et1/99)).